The sequence spans 1106 residues: Probable NAD-specific glutamate dehydrogenase (1106 aa).

The active site involves Lys654.

The protein belongs to the Glu/Leu/Phe/Val dehydrogenases family. Homotetramer.

It is found in the cytoplasm. The catalysed reaction is L-glutamate + NAD(+) + H2O = 2-oxoglutarate + NH4(+) + NADH + H(+). In terms of biological role, NAD(+)-dependent glutamate dehydrogenase which degrades glutamate to ammonia and alpha-ketoglutarate. This chain is Probable NAD-specific glutamate dehydrogenase (gdh2), found in Schizosaccharomyces pombe (strain 972 / ATCC 24843) (Fission yeast).